Consider the following 354-residue polypeptide: Neuronal growth regulator 1 (354 aa).

A signal peptide spans 1–37; it reads MDMMLLVQGACCSNQWLAAVLLSLCCLLPSCLPAGQS. Ig-like C2-type domains are found at residues 38-134, 139-221, and 225-313; these read VDFP…VHLT, PKIY…KVVV, and PTIQ…LPLN. The cysteines at positions 60 and 118 are disulfide-linked. Asparagine 73 and asparagine 155 each carry an N-linked (GlcNAc...) asparagine glycan. 2 disulfides stabilise this stretch: cysteine 160/cysteine 203 and cysteine 245/cysteine 297. Tyrosine 187 is subject to Phosphotyrosine. 4 N-linked (GlcNAc...) asparagine glycosylation sites follow: asparagine 275, asparagine 286, asparagine 294, and asparagine 307. A lipid anchor (GPI-anchor amidated glycine) is attached at glycine 324. Positions 325-354 are cleaved as a propeptide — removed in mature form; sequence SADVLFSCWYLVLTLSSFTSIFYLKNAILQ.

It belongs to the immunoglobulin superfamily. IgLON family.

It localises to the cell membrane. May be involved in cell-adhesion. May function as a trans-neural growth-promoting factor in regenerative axon sprouting in the mammalian brain. The protein is Neuronal growth regulator 1 (NEGR1) of Homo sapiens (Human).